The following is a 457-amino-acid chain: Solute carrier family 38 member 6 (457 aa).

At methionine 1 the chain carries N-acetylmethionine. Serine 4 and serine 7 each carry phosphoserine. 5 consecutive transmembrane segments (helical) span residues 48–68, 70–90, 112–132, 171–191, and 192–212; these read FGLSVFNVMNAIMGSGILGLA, VMANTGILGFSFLLLFVALLA, LGLFAFGLPGKVVVAGTIIIQ, LLIIICVGIVFPLSLLPKIGF, and LGYTSSLSFFFMVFFALVVVI. Cysteine 219 and cysteine 239 are joined by a disulfide. The next 6 helical transmembrane spans lie at 251-271, 289-309, 328-348, 372-392, 395-415, and 432-452; these read VYAIPTMAFSFLCHTSVLPIY, AIALSFLVYFVSALFGYLTFY, VIVMAVKLCILFAVLLTAPLI, SLTTAALNAIIVVLAIYVPDI, VFGVVGASTSTCLIFVFPGLF, and ALFLLLTGAVVGSFSLVLIIF.

The protein belongs to the amino acid/polyamine transporter 2 family. In terms of tissue distribution, expressed exclusively in neurons and not in astrocytes and glia cells. Highly expressed in the synapse. Highly expressed in glutamatergic neurons. Primarily expressed in excitatory neurons, with some minor expression in inhibitory neurons.

Its subcellular location is the cell membrane. The protein resides in the synapse. The enzyme catalyses L-glutamine(out) = L-glutamine(in). It catalyses the reaction L-glutamate(out) = L-glutamate(in). Functionally, amino acid transporter with an apparent selectivity for L-glutamine and L-glutamate. May facilitate glutamine uptake in excitatory neurons. The transport mechanism remains to be elucidated. The polypeptide is Solute carrier family 38 member 6 (Mus musculus (Mouse)).